We begin with the raw amino-acid sequence, 297 residues long: Putative movement protein (297 aa).

Residues 249 to 297 form a disordered region; it reads STGLKIRDKSEDDNQRKHPVPLTSSNNKLKTLRVSTTPIVNGRSTSTSE. Basic and acidic residues predominate over residues 253–264; that stretch reads KIRDKSEDDNQR. The span at 270–297 shows a compositional bias: polar residues; that stretch reads LTSSNNKLKTLRVSTTPIVNGRSTSTSE.

It localises to the host cell junction. It is found in the host plasmodesma. Its function is as follows. Transports viral genome to neighboring plant cells directly through plasmosdesmata, without any budding. The movement protein allows efficient cell to cell propagation, by bypassing the host cell wall barrier. The chain is Putative movement protein (MP) from Citrus sinensis (Sweet orange).